Consider the following 85-residue polypeptide: Cell division protein ZapA (85 aa).

Positions 59–85 (TAVNVVHDYMKLQEKYEILERQLKEKE) form a coiled coil.

Belongs to the ZapA family. Type 2 subfamily. As to quaternary structure, homodimer. Interacts with FtsZ.

It localises to the cytoplasm. Functionally, activator of cell division through the inhibition of FtsZ GTPase activity, therefore promoting FtsZ assembly into bundles of protofilaments necessary for the formation of the division Z ring. It is recruited early at mid-cell but it is not essential for cell division. This is Cell division protein ZapA from Bacillus velezensis (strain DSM 23117 / BGSC 10A6 / LMG 26770 / FZB42) (Bacillus amyloliquefaciens subsp. plantarum).